The sequence spans 156 residues: Small ribosomal subunit protein uS7 (156 aa).

This sequence belongs to the universal ribosomal protein uS7 family. In terms of assembly, part of the 30S ribosomal subunit. Contacts proteins S9 and S11.

Functionally, one of the primary rRNA binding proteins, it binds directly to 16S rRNA where it nucleates assembly of the head domain of the 30S subunit. Is located at the subunit interface close to the decoding center, probably blocks exit of the E-site tRNA. In Geobacter metallireducens (strain ATCC 53774 / DSM 7210 / GS-15), this protein is Small ribosomal subunit protein uS7.